The following is a 103-amino-acid chain: Small ribosomal subunit protein uS10 (103 aa).

Belongs to the universal ribosomal protein uS10 family. Part of the 30S ribosomal subunit.

Involved in the binding of tRNA to the ribosomes. This chain is Small ribosomal subunit protein uS10, found in Vibrio cholerae serotype O1 (strain ATCC 39541 / Classical Ogawa 395 / O395).